The following is a 139-amino-acid chain: Natriuretic peptide Mc-NP (139 aa).

The first 25 residues, 1 to 25, serve as a signal peptide directing secretion; it reads MVGLSRLRGGGLLLVLALLPLALDG. A propeptide spanning residues 26–75 is cleaved from the precursor; that stretch reads KPLEEAPTAPSRIIPFSRPVRKQSQAVLDPMVHPERPAGSGDDGDSRRLE. Residues 45-72 are disordered; that stretch reads VRKQSQAVLDPMVHPERPAGSGDDGDSR. Cysteine 86 and cysteine 102 form a disulfide bridge. Positions 117–139 are excised as a propeptide; the sequence is IIPFSRPVRKESRAALDRMQQPG.

This sequence belongs to the natriuretic peptide family. Expressed by the venom gland.

Its subcellular location is the secreted. Its function is as follows. Snake venom natriuretic peptide that dose-dependently induces the rapid relaxation of rat aortic strips phenylephrine-precontracted. Acts by stimulating cGMP production in a dose-dependent manner (by probably activating NPR1 and/or NPR2). May also show potent hypotensive effects. A synthetic peptide (AA 77-108, where the Cys-95 is replaced by a Ser) increases sodium excretion and urinary volume in rat kidneys. This chain is Natriuretic peptide Mc-NP, found in Micrurus corallinus (Brazilian coral snake).